A 538-amino-acid chain; its full sequence is Bifunctional purine biosynthesis protein PurH (538 aa).

In terms of domain architecture, MGS-like spans lysine 6–valine 158.

This sequence belongs to the PurH family.

It catalyses the reaction (6R)-10-formyltetrahydrofolate + 5-amino-1-(5-phospho-beta-D-ribosyl)imidazole-4-carboxamide = 5-formamido-1-(5-phospho-D-ribosyl)imidazole-4-carboxamide + (6S)-5,6,7,8-tetrahydrofolate. The catalysed reaction is IMP + H2O = 5-formamido-1-(5-phospho-D-ribosyl)imidazole-4-carboxamide. The protein operates within purine metabolism; IMP biosynthesis via de novo pathway; 5-formamido-1-(5-phospho-D-ribosyl)imidazole-4-carboxamide from 5-amino-1-(5-phospho-D-ribosyl)imidazole-4-carboxamide (10-formyl THF route): step 1/1. It functions in the pathway purine metabolism; IMP biosynthesis via de novo pathway; IMP from 5-formamido-1-(5-phospho-D-ribosyl)imidazole-4-carboxamide: step 1/1. This Brucella melitensis biotype 2 (strain ATCC 23457) protein is Bifunctional purine biosynthesis protein PurH.